The sequence spans 115 residues: Large ribosomal subunit protein bL19 (115 aa).

Belongs to the bacterial ribosomal protein bL19 family.

In terms of biological role, this protein is located at the 30S-50S ribosomal subunit interface and may play a role in the structure and function of the aminoacyl-tRNA binding site. This Desulforapulum autotrophicum (strain ATCC 43914 / DSM 3382 / VKM B-1955 / HRM2) (Desulfobacterium autotrophicum) protein is Large ribosomal subunit protein bL19.